The sequence spans 405 residues: Phosphopentomutase (405 aa).

Residues Asp-10, Asp-297, His-302, Asp-338, His-339, and His-350 each contribute to the Mn(2+) site.

Belongs to the phosphopentomutase family. The cofactor is Mn(2+).

It is found in the cytoplasm. It catalyses the reaction 2-deoxy-alpha-D-ribose 1-phosphate = 2-deoxy-D-ribose 5-phosphate. The enzyme catalyses alpha-D-ribose 1-phosphate = D-ribose 5-phosphate. Its pathway is carbohydrate degradation; 2-deoxy-D-ribose 1-phosphate degradation; D-glyceraldehyde 3-phosphate and acetaldehyde from 2-deoxy-alpha-D-ribose 1-phosphate: step 1/2. Its function is as follows. Isomerase that catalyzes the conversion of deoxy-ribose 1-phosphate (dRib-1-P) and ribose 1-phosphate (Rib-1-P) to deoxy-ribose 5-phosphate (dRib-5-P) and ribose 5-phosphate (Rib-5-P), respectively. The chain is Phosphopentomutase from Pseudoalteromonas translucida (strain TAC 125).